Consider the following 381-residue polypeptide: Sensor histidine kinase FlgS (381 aa).

A Histidine kinase domain is found at 177–381 (HLAHEIRNPV…TFEIKILNAS (205 aa)). A Phosphohistidine; by autocatalysis modification is found at H180.

Interacts (via its C-terminal kinase domain) with FlhA (via N-terminus). Autophosphorylated.

The catalysed reaction is ATP + protein L-histidine = ADP + protein N-phospho-L-histidine.. In terms of biological role, member of the two-component regulatory system FlgR/FlgS that induces the transcriptional induction of the genes needed in motility and flagellar biogenesis. Also plays an essential role in bacterial survival at pH 2.5 independently of FlgR. Functions as a sensor protein kinase which is autophosphorylated at a histidine residue and transfers its phosphate group to the conserved aspartic acid residue in the regulatory domain of FlgR. In turn, FlgR functions as a transcriptional regulator initiating transcription from RpoN-dependent promoters. This is Sensor histidine kinase FlgS (flgS) from Helicobacter pylori (strain ATCC 700392 / 26695) (Campylobacter pylori).